Reading from the N-terminus, the 476-residue chain is Aspartyl/glutamyl-tRNA(Asn/Gln) amidotransferase subunit B (476 aa).

The protein belongs to the GatB/GatE family. GatB subfamily. Heterotrimer of A, B and C subunits.

The enzyme catalyses L-glutamyl-tRNA(Gln) + L-glutamine + ATP + H2O = L-glutaminyl-tRNA(Gln) + L-glutamate + ADP + phosphate + H(+). It catalyses the reaction L-aspartyl-tRNA(Asn) + L-glutamine + ATP + H2O = L-asparaginyl-tRNA(Asn) + L-glutamate + ADP + phosphate + 2 H(+). Allows the formation of correctly charged Asn-tRNA(Asn) or Gln-tRNA(Gln) through the transamidation of misacylated Asp-tRNA(Asn) or Glu-tRNA(Gln) in organisms which lack either or both of asparaginyl-tRNA or glutaminyl-tRNA synthetases. The reaction takes place in the presence of glutamine and ATP through an activated phospho-Asp-tRNA(Asn) or phospho-Glu-tRNA(Gln). The chain is Aspartyl/glutamyl-tRNA(Asn/Gln) amidotransferase subunit B from Nitratidesulfovibrio vulgaris (strain ATCC 29579 / DSM 644 / CCUG 34227 / NCIMB 8303 / VKM B-1760 / Hildenborough) (Desulfovibrio vulgaris).